Reading from the N-terminus, the 187-residue chain is Phosphatidylethanolamine-binding protein 1 (187 aa).

A phosphoserine mark is found at serine 6 and serine 13. Position 42 is a phosphothreonine (threonine 42). Phosphoserine occurs at positions 52 and 98. An interaction with RAF1 region spans residues 93–134 (KGGNISSGTVLSDYVGSGPPKGTGLHRYVWLVYEQDGPLKCD).

This sequence belongs to the phosphatidylethanolamine-binding protein family. As to quaternary structure, has a tendency to form dimers by disulfide cross-linking. Interacts with RAF1 and this interaction is enhanced if RAF1 is phosphorylated on residues 'Ser-338', 'Ser-339', 'Tyr-340' and 'Tyr-341'. Interacts with ALOX15; in response to IL13/interleukin-13, prevents the interaction of PEBP1 with RAF1 to activate the ERK signaling cascade.

The protein localises to the cytoplasm. Its function is as follows. Binds ATP, opioids and phosphatidylethanolamine. Has lower affinity for phosphatidylinositol and phosphatidylcholine. Serine protease inhibitor which inhibits thrombin, neuropsin and chymotrypsin but not trypsin, tissue type plasminogen activator and elastase. Inhibits the kinase activity of RAF1 by inhibiting its activation and by dissociating the RAF1/MEK complex and acting as a competitive inhibitor of MEK phosphorylation. HCNP may be involved in the function of the presynaptic cholinergic neurons of the central nervous system. HCNP increases the production of choline acetyltransferase but not acetylcholinesterase. Seems to be mediated by a specific receptor. The polypeptide is Phosphatidylethanolamine-binding protein 1 (PEBP1) (Oryctolagus cuniculus (Rabbit)).